Reading from the N-terminus, the 286-residue chain is MSLPMSPVSPINTTTSTSTTTTPLSPPSSIENSSHPLSTSISNNSITSDSSLDSNTSTSSTTTTNYGTKTPSGNARIFNCTLCQRAFTREEHLTRHTLSTHNKLKPFTCGICSRPFSRRDLLLRHAKNLHQGSEVAVSRIRKSYKHCNKDNDSKSGSDSNTNKTNKNGKKQEQEDDEEEGSRSDSSSGADDEDSNTSSGGSNYHAIGSGNKRFVNNSPQLKKILTNGSVPSTTTTSTTTVPTSTNNDTASITNSSTSHIHQRSLNVEDYDTPEKKRLKMSVNMLVS.

Low complexity-rich tracts occupy residues 1–29 (MSLP…PPSS) and 37–65 (LSTS…TTTN). The interval 1-71 (MSLPMSPVSP…TTTNYGTKTP (71 aa)) is disordered. 2 consecutive C2H2-type zinc fingers follow at residues 78-101 (FNCT…LSTH) and 107-130 (FTCG…KNLH). The segment at 146-260 (HCNKDNDSKS…ITNSSTSHIH (115 aa)) is disordered. 2 stretches are compositionally biased toward low complexity: residues 156–165 (GSDSNTNKTN) and 228–244 (SVPS…PTST). Over residues 245-260 (NNDTASITNSSTSHIH) the composition is skewed to polar residues.

It localises to the nucleus. In terms of biological role, transcription factor required for yeast cell adherence to silicone substrate. This is Transcriptional regulator of yeast form adherence 4 (TRY4) from Candida albicans (strain SC5314 / ATCC MYA-2876) (Yeast).